The primary structure comprises 295 residues: MGLNFTKMHGLGNDYIVINEFDGEKIKEDEKAEFSKKICKRGFSIGADGVIFVQPATDEKYDIRFRIFNSDGSEAEMCGNGIRCFSKFVYERVMQKNPLNVETMGGLRVSEMNIENNIVKSIKVFMGAPTFELKDIPMVVEGKSENDVFLDEEIELKNALLNSVKLSVVNVGNPHAVIFMKDNNLKAPFIRTHLNILGKEIEHHSVFPEKINVHFVEIVNPQEIKIITWERGAGYTTACGTGTTSSVIIANKLGKTGNKVLAHLDGGDLEIEIKEDGVYMEGDAVIVYDGELYQY.

The substrate site is built by asparagine 13 and asparagine 69. Catalysis depends on cysteine 78, which acts as the Proton donor. Residues 79–80, asparagine 173, asparagine 212, and 230–231 contribute to the substrate site; these read GN and ER. Catalysis depends on cysteine 239, which acts as the Proton acceptor. 240–241 is a substrate binding site; that stretch reads GT.

This sequence belongs to the diaminopimelate epimerase family. In terms of assembly, homodimer.

It localises to the cytoplasm. It carries out the reaction (2S,6S)-2,6-diaminopimelate = meso-2,6-diaminopimelate. Its pathway is amino-acid biosynthesis; L-lysine biosynthesis via DAP pathway; DL-2,6-diaminopimelate from LL-2,6-diaminopimelate: step 1/1. Functionally, catalyzes the stereoinversion of LL-2,6-diaminopimelate (L,L-DAP) to meso-diaminopimelate (meso-DAP), a precursor of L-lysine. This is Diaminopimelate epimerase from Methanococcus aeolicus (strain ATCC BAA-1280 / DSM 17508 / OCM 812 / Nankai-3).